We begin with the raw amino-acid sequence, 1398 residues long: Protein timeless (1398 aa).

A necessary for normal circadian rhythm region spans residues 237–268; that stretch reads VSTLQKLLSLWFEASLSESSEDNESNTSPPKQ. Disordered stretches follow at residues 254–300, 322–452, 478–555, 1127–1147, and 1220–1239; these read ESSE…GGMR, ARVP…QKFN, TKGK…LRRK, TASS…SSVS, and NHRT…SSTT. Over residues 273–290 the composition is skewed to low complexity; it reads SSPMLTSDPTSDSSDNGS. Residues 291-300 are compositionally biased toward gly residues; that stretch reads NGRGMGGGMR. A compositionally biased stretch (polar residues) spans 338–355; that stretch reads MTGNDSEQPGSPEQSQPA. Residues 365–375 show a composition bias toward basic and acidic residues; that stretch reads EDQRHRQLNEH. Acidic residues predominate over residues 376 to 390; it reads GEEDEDEDEVEEEEY. 3 stretches are compositionally biased toward polar residues: residues 400–421, 440–452, and 504–515; these read LNLT…SSAP, ASTS…QKFN, and QVENQESISTSS. Residues 522–531 show a composition bias toward low complexity; that stretch reads QGKPQHQKPP. Residues 550 to 560 carry the Nuclear localization signal motif; the sequence is KELRRKKLVKR.

The protein belongs to the timeless family. In terms of assembly, forms a heterodimer with period (PER); the complex then translocates into the nucleus. Post-translationally, phosphorylated with a circadian rhythmicity. As to expression, expressed in head, photoreceptors, lateral neurons and glial cells in the lamina and medulla of the optic lobes. Expression follows a light-dark cycle, levels show a significant decrease at the end of the night and then remain low throughout the light period (at protein level).

Its subcellular location is the nucleus. It is found in the cytoplasm. The protein localises to the perinuclear region. Its function is as follows. Required for the production of circadian rhythms. The biological cycle depends on the rhythmic formation and nuclear localization of the TIM-PER complex. Light induces the degradation of TIM, which promotes elimination of PER. Nuclear activity of the heterodimer coordinatively regulates PER and TIM transcription through a negative feedback loop. Behaves as a negative element in circadian transcriptional loop. Does not appear to bind DNA, suggesting indirect transcriptional inhibition. This Drosophila melanogaster (Fruit fly) protein is Protein timeless (tim).